The primary structure comprises 711 residues: F-box only protein 34 (711 aa).

Disordered regions lie at residues 1–36, 249–271, 337–372, and 494–529; these read MHLKPYWKLQKKEHPPEVSRETQRTPMNHQKAVNDE, SESYSAPGACEEPTERGNLEVGE, DTQVNPVGSVSVDCGPSRADRCSPKEDQAWDGASQD, and YSQLNESTTKESSEASQLEDAAGGDSASEEKSGSAE. The segment covering 10–23 has biased composition (basic and acidic residues); the sequence is QKKEHPPEVSRETQ. Basic and acidic residues predominate over residues 354–364; it reads RADRCSPKEDQ. The F-box domain occupies 572–624; it reads QQYMAFLPHHIMVKIFRLLPTKSLVALKCTCCYFKFIIEYYNIRPADSRWVRD.

Directly interacts with SKP1 and CUL1.

Substrate-recognition component of the SCF (SKP1-CUL1-F-box protein)-type E3 ubiquitin ligase complex. This is F-box only protein 34 (FBXO34) from Homo sapiens (Human).